The primary structure comprises 335 residues: Mesoderm-specific transcript protein (335 aa).

2 helical membrane passes run 13–33 (WWVQ…HIPP) and 63–83 (VGVV…TSSY). An AB hydrolase-1 domain is found at 71–310 (IVVLLHGFPT…PRSTVSILDD (240 aa)). The short motif at 98-103 (RVIALD) is the RVIALD element. Asn-163 carries N-linked (GlcNAc...) asparagine glycosylation. The helical transmembrane segment at 266 to 286 (VGALASVSIPIHFIYGPLDPI) threads the bilayer.

Belongs to the AB hydrolase superfamily. In terms of tissue distribution, expressed in mesodermal tissues. Isoform 1 is exclusively expressed from the paternal allele in all fetal tissues and cell lines examined, whereas isoform 2 is preferentially expressed from the paternal allele in a tissue-type-specific manner.

The protein localises to the endoplasmic reticulum membrane. This chain is Mesoderm-specific transcript protein (Mest), found in Mus musculus (Mouse).